Here is a 314-residue protein sequence, read N- to C-terminus: A-kinase anchor protein 7 isoform gamma (314 aa).

The interval 1–46 (MPFAAVDIQDDCGSPDVPQANPKRSKEEEEDRGDKNDHVKKRKKAK) is disordered. Residues 24 to 37 (RSKEEEEDRGDKND) are compositionally biased toward basic and acidic residues. Residues Thr-95 and 185 to 187 (HLT) contribute to the AMP site. CMP contacts are provided by residues Thr-95 and 185–187 (HLT). The tract at residues 260–314 (AELVRLSKRLVENAVLKAVQQYLEETQNKKQPGEGNSTKAEEGDRNGDGSDNNRK) is PKA-RII-alpha subunit binding domain. The RI-alpha-binding stretch occupies residues 261-285 (ELVRLSKRLVENAVLKAVQQYLEET). Residues 262–275 (LVRLSKRLVENAVL) form an RII-binding region. Positions 281–314 (YLEETQNKKQPGEGNSTKAEEGDRNGDGSDNNRK) are disordered. Residues 298–314 (KAEEGDRNGDGSDNNRK) are compositionally biased toward basic and acidic residues.

In terms of assembly, binds cAMP-dependent protein kinase (PKA). Interacts with PRKCA; only the cytoplasmic form is capable of interacting with PRKCA. In terms of tissue distribution, expressed in oocytes.

It localises to the nucleus. The protein localises to the cytoplasm. Its function is as follows. Probably targets cAMP-dependent protein kinase (PKA) to the cellular membrane or cytoskeletal structures. The membrane-associated form reduces epithelial sodium channel (ENaC) activity, whereas the free cytoplasmic form may negatively regulate ENaC channel feedback inhibition by intracellular sodium. The polypeptide is A-kinase anchor protein 7 isoform gamma (Mus musculus (Mouse)).